The sequence spans 216 residues: DNA replication complex GINS protein PSF3 (216 aa).

Residues 1–16 (MSEAYFRVESGALGPE) form a not essential for folding and stability of GINS complex, but may regulate accessibility to the central complex pore region.

Belongs to the GINS3/PSF3 family. As to quaternary structure, component of the GINS complex which is a heterotetramer of GINS1, GINS2, GINS3 and GINS4. Forms a stable subcomplex with GINS2. GINS complex interacts with DNA primase in vitro. Component of the CMG helicase complex, a hexameric ring of related MCM2-7 subunits stabilized by CDC45 and the tetrameric GINS complex.

The protein localises to the nucleus. It is found in the chromosome. Required for correct functioning of the GINS complex, a complex that plays an essential role in the initiation of DNA replication, and progression of DNA replication forks. GINS complex is a core component of CDC45-MCM-GINS (CMG) helicase, the molecular machine that unwinds template DNA during replication, and around which the replisome is built. The chain is DNA replication complex GINS protein PSF3 (GINS3) from Bos taurus (Bovine).